Reading from the N-terminus, the 207-residue chain is Ribosomal RNA large subunit methyltransferase E (207 aa).

Residues G60, W62, D80, D96, and D121 each contribute to the S-adenosyl-L-methionine site. K161 serves as the catalytic Proton acceptor.

This sequence belongs to the class I-like SAM-binding methyltransferase superfamily. RNA methyltransferase RlmE family.

It is found in the cytoplasm. It catalyses the reaction uridine(2552) in 23S rRNA + S-adenosyl-L-methionine = 2'-O-methyluridine(2552) in 23S rRNA + S-adenosyl-L-homocysteine + H(+). In terms of biological role, specifically methylates the uridine in position 2552 of 23S rRNA at the 2'-O position of the ribose in the fully assembled 50S ribosomal subunit. In Pseudomonas aeruginosa (strain UCBPP-PA14), this protein is Ribosomal RNA large subunit methyltransferase E.